Reading from the N-terminus, the 139-residue chain is Sec-independent protein translocase protein TatB (139 aa).

The chain crosses the membrane as a helical span at residues 1–21; that stretch reads MFDMGFLELMLIGVVALLVLG. A compositionally biased stretch (basic and acidic residues) spans 66–86; that stretch reads QQRKLDAGLGKVRDEVERHGD. A disordered region spans residues 66–139; that stretch reads QQRKLDAGLG…APSAKDSNAP (74 aa).

This sequence belongs to the TatB family. As to quaternary structure, the Tat system comprises two distinct complexes: a TatABC complex, containing multiple copies of TatA, TatB and TatC subunits, and a separate TatA complex, containing only TatA subunits. Substrates initially bind to the TatABC complex, which probably triggers association of the separate TatA complex to form the active translocon.

The protein localises to the cell inner membrane. Part of the twin-arginine translocation (Tat) system that transports large folded proteins containing a characteristic twin-arginine motif in their signal peptide across membranes. Together with TatC, TatB is part of a receptor directly interacting with Tat signal peptides. TatB may form an oligomeric binding site that transiently accommodates folded Tat precursor proteins before their translocation. The sequence is that of Sec-independent protein translocase protein TatB from Chromohalobacter salexigens (strain ATCC BAA-138 / DSM 3043 / CIP 106854 / NCIMB 13768 / 1H11).